A 253-amino-acid chain; its full sequence is 3-deoxy-manno-octulosonate cytidylyltransferase (253 aa).

Belongs to the KdsB family.

The protein localises to the cytoplasm. The enzyme catalyses 3-deoxy-alpha-D-manno-oct-2-ulosonate + CTP = CMP-3-deoxy-beta-D-manno-octulosonate + diphosphate. Its pathway is nucleotide-sugar biosynthesis; CMP-3-deoxy-D-manno-octulosonate biosynthesis; CMP-3-deoxy-D-manno-octulosonate from 3-deoxy-D-manno-octulosonate and CTP: step 1/1. It functions in the pathway bacterial outer membrane biogenesis; lipopolysaccharide biosynthesis. Functionally, activates KDO (a required 8-carbon sugar) for incorporation into bacterial lipopolysaccharide in Gram-negative bacteria. The protein is 3-deoxy-manno-octulosonate cytidylyltransferase of Geotalea daltonii (strain DSM 22248 / JCM 15807 / FRC-32) (Geobacter daltonii).